We begin with the raw amino-acid sequence, 120 residues long: Glutamate--tRNA ligase (120 aa).

Belongs to the class-I aminoacyl-tRNA synthetase family. Glutamate--tRNA ligase type 1 subfamily. In terms of assembly, monomer.

Its subcellular location is the cytoplasm. The enzyme catalyses tRNA(Glu) + L-glutamate + ATP = L-glutamyl-tRNA(Glu) + AMP + diphosphate. Catalyzes the attachment of glutamate to tRNA(Glu) in a two-step reaction: glutamate is first activated by ATP to form Glu-AMP and then transferred to the acceptor end of tRNA(Glu). The sequence is that of Glutamate--tRNA ligase (gltX) from Staphylococcus xylosus.